Consider the following 339-residue polypeptide: Olfactory receptor 7E24 (339 aa).

Over 1 to 43 the chain is Extracellular; that stretch reads MSYFPILFFFFLKRCPSYTEPQNLTGVSEFLLLGLSEDPELQP. Asparagine 23 is a glycosylation site (N-linked (GlcNAc...) asparagine). The helical transmembrane segment at 44–64 threads the bilayer; sequence VLAGLFLSMYLVTVLGNLLII. The Cytoplasmic portion of the chain corresponds to 65-72; that stretch reads LAVSSDSH. A helical membrane pass occupies residues 73 to 93; that stretch reads LHTPMYFFLSNLSLADIGFTS. Over 94–117 the chain is Extracellular; that stretch reads TTVPKMIVDMQTHSRVISYEGCLT. Cysteine 115 and cysteine 207 are oxidised to a cystine. The helical transmembrane segment at 118–138 threads the bilayer; that stretch reads QMSFFVLFACMDDMLLSVMAY. The Cytoplasmic segment spans residues 139–157; sequence DRFVAICHPLHYRIIMNPR. Residues 158 to 178 form a helical membrane-spanning segment; that stretch reads LCGFLILLSFFISLLDSQLHN. Over 179–215 the chain is Extracellular; it reads LIMLQLTCFKDVDISNFFCDPSQLLHLRCSDTFINEM. The helical transmembrane segment at 216 to 235 threads the bilayer; sequence VIYFMGAIFGCLPISGILFS. The Cytoplasmic portion of the chain corresponds to 236–255; the sequence is YYKIVSPILRVPTSDGKYKA. The helical transmembrane segment at 256 to 276 threads the bilayer; it reads FSTCGSHLAVVCLFYGTGLVG. Residues 277-289 lie on the Extracellular side of the membrane; the sequence is YLSSAVLPSPRKS. Residues 290–310 form a helical membrane-spanning segment; it reads MVASVMYTVVTPMLNPFIYSL. The Cytoplasmic portion of the chain corresponds to 311–339; that stretch reads RNKDIQSALCRLHGRIIKSHHLHPFCYMG.

The protein belongs to the G-protein coupled receptor 1 family.

It localises to the cell membrane. Functionally, odorant receptor. This Homo sapiens (Human) protein is Olfactory receptor 7E24 (OR7E24).